A 396-amino-acid chain; its full sequence is Elongation factor Tu (396 aa).

Residues Lys10–Glu206 form the tr-type G domain. The tract at residues Gly19–Thr26 is G1. Position 19 to 26 (Gly19 to Thr26) interacts with GTP. Mg(2+) is bound at residue Thr26. The G2 stretch occupies residues Gly60 to Ser64. A G3 region spans residues Asp81–Gly84. GTP contacts are provided by residues Asp81–His85 and Asn136–Asp139. The G4 stretch occupies residues Asn136–Asp139. A G5 region spans residues Ser174 to Leu176.

It belongs to the TRAFAC class translation factor GTPase superfamily. Classic translation factor GTPase family. EF-Tu/EF-1A subfamily. Monomer.

It localises to the cytoplasm. The enzyme catalyses GTP + H2O = GDP + phosphate + H(+). Functionally, GTP hydrolase that promotes the GTP-dependent binding of aminoacyl-tRNA to the A-site of ribosomes during protein biosynthesis. The sequence is that of Elongation factor Tu from Rhodopseudomonas palustris (strain HaA2).